Consider the following 231-residue polypeptide: Glutathione-S-transferase (231 aa).

Positions 15-98 (LFAVKGTATS…YIADAYDKDG (84 aa)) constitute a GST N-terminal domain.

This sequence belongs to the GST superfamily.

It catalyses the reaction RX + glutathione = an S-substituted glutathione + a halide anion + H(+). In terms of biological role, conjugation of reduced glutathione to a wide number of exogenous and endogenous hydrophobic electrophiles. This chain is Glutathione-S-transferase, found in Alternaria alternata (Alternaria rot fungus).